We begin with the raw amino-acid sequence, 398 residues long: Cathepsin E (398 aa).

An N-terminal signal peptide occupies residues 1–21 (MKPLFVLLLLLLLLDLAQAQG). Residues 22-58 (VLHRVPLRRHQSLRKKLRAQGQLSDFWRSHNLDMIEF) constitute a propeptide, activation peptide. Positions 80 to 394 (YFGTVSIGSP…DRGNNQVGLA (315 aa)) constitute a Peptidase A1 domain. An N-linked (GlcNAc...) asparagine glycan is attached at asparagine 92. Aspartate 98 is a catalytic residue. 2 disulfides stabilise this stretch: cysteine 111-cysteine 116 and cysteine 274-cysteine 278. The active site involves aspartate 283.

This sequence belongs to the peptidase A1 family. Homodimer; disulfide-linked. Glycosylated. The nature of the carbohydrate chain varies between cell types. In brain microglia, the proenzyme contains a high mannose-type oligosaccharide, while the mature enzyme contains a complex-type oligosaccharide. In stomach and spleen, the mature enzyme contains a high mannose-type oligosaccharide. In erythrocyte membranes, the mature enzyme contains a complex-type oligosaccharide. Expressed abundantly in lymphocytes and macrophages of the thymus and spleen, and in the M cells of the intestine. In the brain, expression is limited to reactive microglial cells, the large pyrimidial neurons in the cerebral cortex, the CA1 and CA3 pyrimidial neurons of the hippocampus, the large neurons of the neostriatum, and the Purkinje neurons of the cerebellum.

The protein resides in the endosome. The enzyme catalyses Similar to cathepsin D, but slightly broader specificity.. Functionally, may have a role in immune function. Probably involved in the processing of antigenic peptides during MHC class II-mediated antigen presentation. May play a role in activation-induced lymphocyte depletion in the thymus, and in neuronal degeneration and glial cell activation in the brain. The polypeptide is Cathepsin E (Ctse) (Rattus norvegicus (Rat)).